Consider the following 367-residue polypeptide: Centromere protein L (367 aa).

It belongs to the CENP-L/IML3 family.

It localises to the nucleus. Its subcellular location is the chromosome. The protein localises to the centromere. Its function is as follows. Probable component of a centromeric complex involved in assembly of kinetochore proteins, mitotic progression and chromosome segregation. This is Centromere protein L (cenpl) from Danio rerio (Zebrafish).